Here is a 189-residue protein sequence, read N- to C-terminus: RPW8-like protein 1 (189 aa).

In terms of domain architecture, RPW8 spans 1–153; it reads MPLVELLTSA…ITRQPMDIIE (153 aa). Residues 7–24 traverse the membrane as a helical segment; it reads LTSAALGLSLQLLHDAII. Coiled-coil stretches lie at residues 65 to 92 and 126 to 147; these read FRKV…LKLR and DIKK…ITRQ. An N-linked (GlcNAc...) asparagine glycan is attached at asparagine 177.

It belongs to the plant RPW8 protein family.

The protein resides in the membrane. Its function is as follows. Probable disease resistance (R) protein. The protein is RPW8-like protein 1 of Arabidopsis thaliana (Mouse-ear cress).